The chain runs to 98 residues: NADH-ubiquinone oxidoreductase chain 4L (98 aa).

3 consecutive transmembrane segments (helical) span residues 1-21 (MPYIYMNITLAFVISLIGTLM), 29-49 (SLLCLEGMMLSLFTLNALLSL), and 61-81 (LILLVFAACEAAVGLALLVMI).

This sequence belongs to the complex I subunit 4L family. As to quaternary structure, core subunit of respiratory chain NADH dehydrogenase (Complex I) which is composed of 45 different subunits.

It is found in the mitochondrion inner membrane. The enzyme catalyses a ubiquinone + NADH + 5 H(+)(in) = a ubiquinol + NAD(+) + 4 H(+)(out). Its function is as follows. Core subunit of the mitochondrial membrane respiratory chain NADH dehydrogenase (Complex I) which catalyzes electron transfer from NADH through the respiratory chain, using ubiquinone as an electron acceptor. Part of the enzyme membrane arm which is embedded in the lipid bilayer and involved in proton translocation. The polypeptide is NADH-ubiquinone oxidoreductase chain 4L (MT-ND4L) (Loxodonta africana (African elephant)).